The chain runs to 250 residues: Putative inactive flavonol synthase 2 (250 aa).

A Fe2OG dioxygenase domain is found at 171 to 250; it reads TEYVMRINNY…EQWKVQECVA (80 aa). Fe cation contacts are provided by His195 and Asp197.

It belongs to the iron/ascorbate-dependent oxidoreductase family.

The sequence is that of Putative inactive flavonol synthase 2 (FLS2) from Arabidopsis thaliana (Mouse-ear cress).